A 225-amino-acid polypeptide reads, in one-letter code: Ribose-5-phosphate isomerase A (225 aa).

Residues 27-30, 82-85, and 95-98 contribute to the substrate site; these read SGST, DGAD, and KGGG. The Proton acceptor role is filled by Glu104. Lys122 is a binding site for substrate.

It belongs to the ribose 5-phosphate isomerase family. Homodimer.

The enzyme catalyses aldehydo-D-ribose 5-phosphate = D-ribulose 5-phosphate. It functions in the pathway carbohydrate degradation; pentose phosphate pathway; D-ribose 5-phosphate from D-ribulose 5-phosphate (non-oxidative stage): step 1/1. Its function is as follows. Catalyzes the reversible conversion of ribose-5-phosphate to ribulose 5-phosphate. This Archaeoglobus fulgidus (strain ATCC 49558 / DSM 4304 / JCM 9628 / NBRC 100126 / VC-16) protein is Ribose-5-phosphate isomerase A.